The following is a 695-amino-acid chain: GATA zinc finger domain-containing protein 16 (695 aa).

Disordered regions lie at residues 82–111 (SPIL…SNNA), 134–304 (VVNS…QQDK), and 422–472 (NNQF…KMRY). 2 stretches are compositionally biased toward low complexity: residues 87–111 (SQQQ…SNNA) and 140–149 (KTTTTNNKPP). The stretch at 150–174 (KQSKRKEKERLEEEKQTVAQQQQYQ) forms a coiled coil. Residues 155-165 (KEKERLEEEKQ) are compositionally biased toward basic and acidic residues. Polar residues predominate over residues 199 to 209 (VSTTPYGNSQF). Positions 210–298 (NNNNNNNNNN…NSNSNNNNNN (89 aa)) are enriched in low complexity. Over residues 422-433 (NNQFSGDKQSAL) the composition is skewed to polar residues. Positions 434 to 446 (NNVKNSKGGNTNN) are enriched in low complexity. A GATA-type zinc finger spans residues 479–504 (CHTCGVTNTPEWRRGPNGAKTLCNAC). The interval 523–646 (NSTGVNITEP…TTNSITTPTT (124 aa)) is disordered. Composition is skewed to low complexity over residues 544 to 556 (DNNN…SDSN) and 564 to 646 (GSNN…TPTT).

The polypeptide is GATA zinc finger domain-containing protein 16 (gtaP) (Dictyostelium discoideum (Social amoeba)).